Consider the following 175-residue polypeptide: MGTVNVVNVAKKHQFSWYEKFYFWSIGKGLWITLKHFVKVAFFNKQVTIEYPDKKRQYSTRFRGMHSMKRDEQGRERCTACFCCMWICPANAIHIEAAEVTAERQHLHPEDKYAKKFEINLLRCIFCGLCEEACPKGAIYLDGTGEMAADNREDLFLTKERMMEKTGGPILGQRN.

2 consecutive 4Fe-4S ferredoxin-type domains span residues 69–98 (KRDE…IEAA) and 115–144 (KKFE…LDGT). 8 residues coordinate [4Fe-4S] cluster: C78, C81, C84, C88, C124, C127, C130, and C134.

The protein belongs to the complex I 23 kDa subunit family. As to quaternary structure, NDH-1 is composed of 14 different subunits. Subunits NuoA, H, J, K, L, M, N constitute the membrane sector of the complex. The cofactor is [4Fe-4S] cluster.

It is found in the cell inner membrane. The enzyme catalyses a quinone + NADH + 5 H(+)(in) = a quinol + NAD(+) + 4 H(+)(out). Functionally, NDH-1 shuttles electrons from NADH, via FMN and iron-sulfur (Fe-S) centers, to quinones in the respiratory chain. The immediate electron acceptor for the enzyme in this species is believed to be ubiquinone. Couples the redox reaction to proton translocation (for every two electrons transferred, four hydrogen ions are translocated across the cytoplasmic membrane), and thus conserves the redox energy in a proton gradient. The polypeptide is NADH-quinone oxidoreductase subunit I (Leptospira biflexa serovar Patoc (strain Patoc 1 / Ames)).